We begin with the raw amino-acid sequence, 858 residues long: Taste receptor type 1 member 3 (858 aa).

Residues 1–20 form the signal peptide; it reads MPGLAILGLSLAAFLELGMG. At 21 to 575 the chain is on the extracellular side; it reads SSLCLSQQFK…FLAWGEPAVL (555 aa). N-linked (GlcNAc...) asparagine glycans are attached at residues N85, N130, N203, N264, N379, N387, N418, N439, and N482. A helical transmembrane segment spans residues 576-596; it reads SLLLLLCLVLGLTLAALGLFV. The Cytoplasmic segment spans residues 597 to 610; sequence HYWDSPLVQASGGS. A helical membrane pass occupies residues 611–631; that stretch reads LFCFGLICLGLFCLSVLLFPG. Over 632–644 the chain is Extracellular; that stretch reads RPRSASCLAQQPM. The chain crosses the membrane as a helical span at residues 645–665; it reads AHLPLTGCLSTLFLQAAEIFV. Residues 666 to 687 lie on the Cytoplasmic side of the membrane; the sequence is ESELPLSWANWLCSYLRGPWAW. Residues 688 to 708 traverse the membrane as a helical segment; that stretch reads LVVLLATLVEAALCAWYLMAF. The Extracellular segment spans residues 709–735; the sequence is PPEVVTDWQVLPTEVLEHCRMRSWVSL. The chain crosses the membrane as a helical span at residues 736-756; that stretch reads GLVHITNAVLAFLCFLGTFLV. The Cytoplasmic segment spans residues 757 to 767; the sequence is QSQPGRYNRAR. The chain crosses the membrane as a helical span at residues 768-788; that stretch reads GLTFAMLAYFIIWVSFVPLLA. Residues 789-796 lie on the Extracellular side of the membrane; sequence NVQVAYQP. Residues 797-817 traverse the membrane as a helical segment; sequence AVQMGAILFCALGILATFHLP. The Cytoplasmic portion of the chain corresponds to 818-858; it reads KCYVLLWLPELNTQEFFLGRSPKEASDGNSGSSEATRGHSE. The disordered stretch occupies residues 839 to 858; the sequence is PKEASDGNSGSSEATRGHSE.

This sequence belongs to the G-protein coupled receptor 3 family. TAS1R subfamily. As to quaternary structure, forms homodimers or heterodimers with TAS1R1 and TAS1R2.

The protein resides in the cell membrane. Its function is as follows. Putative taste receptor. TAS1R1/TAS1R3 responds to the umami taste stimulus (the taste of monosodium glutamate) and also to most of the 20 standard L-amino acids, but not to their D-enantiomers or other compounds. TAS1R2/TAS1R3 recognizes diverse natural and synthetic sweeteners. TAS1R3 is essential for the recognition and response to the disaccharide trehalose. Sequence differences within and between species can significantly influence the selectivity and specificity of taste responses. The polypeptide is Taste receptor type 1 member 3 (Tas1r3) (Rattus norvegicus (Rat)).